The sequence spans 241 residues: Capsid protein (241 aa).

The short motif at 1–26 (MSPASSWKRKRPSSSSAQASKKRRVY) is the Bipartite nuclear localization signal element. The interval 1 to 30 (MSPASSWKRKRPSSSSAQASKKRRVYRPAV) is disordered.

The protein belongs to the geminiviridae capsid protein family. In terms of assembly, homomultimer. Interacts with the movement protein. Binds to single-stranded and double-stranded viral DNA.

It is found in the virion. The protein localises to the host nucleus. In terms of biological role, encapsidates the viral genome into characteristic twinned ('geminate') particles. Binds the genomic viral ssDNA and shuttles it into and out of the cell nucleus. Plays a role in protection of the genome from degradation, virus acquisition and transmission by insect vectors, infectivity, and systemic movement. The CP of monopartite geminiviruses is absolutely essential for virus movement. The protein is Capsid protein of Avena sativa (Oat).